The chain runs to 77 residues: Small ribosomal subunit protein bS20 (77 aa).

It belongs to the bacterial ribosomal protein bS20 family.

Its function is as follows. Binds directly to 16S ribosomal RNA. The protein is Small ribosomal subunit protein bS20 of Lactococcus lactis subsp. cremoris (strain MG1363).